A 465-amino-acid polypeptide reads, in one-letter code: Ribulose bisphosphate carboxylase large chain (465 aa).

At Lys4 the chain carries N6,N6,N6-trimethyllysine. Substrate is bound by residues Asn113 and Thr163. Lys165 serves as the catalytic Proton acceptor. Lys167 is a substrate binding site. Mg(2+) contacts are provided by Lys191, Asp193, and Glu194. Lys191 bears the N6-carboxylysine mark. The Proton acceptor role is filled by His284. Substrate is bound by residues Arg285, His317, and Ser369.

It belongs to the RuBisCO large chain family. Type I subfamily. Heterohexadecamer of 8 large chains and 8 small chains; disulfide-linked. The disulfide link is formed within the large subunit homodimers. Mg(2+) serves as cofactor. The disulfide bond which can form in the large chain dimeric partners within the hexadecamer appears to be associated with oxidative stress and protein turnover.

It localises to the plastid. The protein resides in the chloroplast. The enzyme catalyses 2 (2R)-3-phosphoglycerate + 2 H(+) = D-ribulose 1,5-bisphosphate + CO2 + H2O. It catalyses the reaction D-ribulose 1,5-bisphosphate + O2 = 2-phosphoglycolate + (2R)-3-phosphoglycerate + 2 H(+). Its function is as follows. RuBisCO catalyzes two reactions: the carboxylation of D-ribulose 1,5-bisphosphate, the primary event in carbon dioxide fixation, as well as the oxidative fragmentation of the pentose substrate in the photorespiration process. Both reactions occur simultaneously and in competition at the same active site. The polypeptide is Ribulose bisphosphate carboxylase large chain (Platytheca verticillata).